The primary structure comprises 322 residues: Phosphate acetyltransferase (322 aa).

The protein belongs to the phosphate acetyltransferase and butyryltransferase family.

It is found in the cytoplasm. It catalyses the reaction acetyl-CoA + phosphate = acetyl phosphate + CoA. The protein operates within metabolic intermediate biosynthesis; acetyl-CoA biosynthesis; acetyl-CoA from acetate: step 2/2. The sequence is that of Phosphate acetyltransferase (pta) from Mycoplasma capricolum subsp. capricolum (strain California kid / ATCC 27343 / NCTC 10154).